The sequence spans 245 residues: MTLDVDAQKKDEKLLLATIHQEYKILAEYKMIESEKVSGIYVIPSYANSLQWFGVFFGRQGFYENSVFRFSILLPDGFPQDKTTPAIVFQQNVVHPLVCPFTNSLDISHAFPEWRCGEDHLWQVLKYMQVIFADPLECIRSVGSTQELSNVEASKLLTTNRDAFAALVQESIAESKAHIYDTPPTEDPHYIVFEKFQEDIHGPVLEQIRNGRTTNSPAESGGGGAATGLSWVKVKEGEFKPLSIE.

One can recognise a UBC core domain in the interval H20–A177.

The protein belongs to the ubiquitin-conjugating enzyme family. FTS subfamily.

The sequence is that of Protein crossbronx (cbx) from Drosophila mojavensis (Fruit fly).